The sequence spans 276 residues: Rhomboid protease GlpG (276 aa).

The next 6 membrane-spanning stretches (helical) occupy residues G94–L114, A142–G162, I169–Q189, F192–W212, L229–I249, and G252–G272. The Nucleophile role is filled by S201. The active site involves H254.

The protein belongs to the peptidase S54 family.

The protein resides in the cell inner membrane. It catalyses the reaction Cleaves type-1 transmembrane domains using a catalytic dyad composed of serine and histidine that are contributed by different transmembrane domains.. Rhomboid-type serine protease that catalyzes intramembrane proteolysis. The sequence is that of Rhomboid protease GlpG from Klebsiella pneumoniae subsp. pneumoniae (strain ATCC 700721 / MGH 78578).